The sequence spans 815 residues: ABC transporter G family member 7 (815 aa).

Disordered regions lie at residues Asn-81–Phe-141 and Lys-177–Lys-249. Residues Glu-164–Ser-199 adopt a coiled-coil conformation. Residues Ser-194–Ser-210 show a composition bias toward low complexity. Over residues Gly-211–Gly-248 the composition is skewed to polar residues. One can recognise an ABC transporter domain in the interval Thr-242–Asn-485. Position 274-281 (Gly-274–Ser-281) interacts with ATP. One can recognise an ABC transmembrane type-2 domain in the interval Thr-562 to Leu-810. The next 7 helical transmembrane spans lie at Leu-568–Ser-588, Ile-598–Leu-618, Ala-647–Leu-667, Phe-675–Ile-695, Phe-706–Val-726, Ser-732–Ala-752, and Gly-788–Ser-808.

Belongs to the ABC transporter superfamily. ABCG family.

It is found in the membrane. The chain is ABC transporter G family member 7 (abcG7) from Dictyostelium discoideum (Social amoeba).